A 426-amino-acid polypeptide reads, in one-letter code: Gamma-glutamyl phosphate reductase (426 aa).

The protein belongs to the gamma-glutamyl phosphate reductase family.

The protein localises to the cytoplasm. The catalysed reaction is L-glutamate 5-semialdehyde + phosphate + NADP(+) = L-glutamyl 5-phosphate + NADPH + H(+). It functions in the pathway amino-acid biosynthesis; L-proline biosynthesis; L-glutamate 5-semialdehyde from L-glutamate: step 2/2. In terms of biological role, catalyzes the NADPH-dependent reduction of L-glutamate 5-phosphate into L-glutamate 5-semialdehyde and phosphate. The product spontaneously undergoes cyclization to form 1-pyrroline-5-carboxylate. This is Gamma-glutamyl phosphate reductase from Cupriavidus necator (strain ATCC 17699 / DSM 428 / KCTC 22496 / NCIMB 10442 / H16 / Stanier 337) (Ralstonia eutropha).